Consider the following 961-residue polypeptide: Ubiquitin carboxyl-terminal hydrolase 4 (961 aa).

The region spanning 11–122 is the DUSP domain; that stretch reads PDVETQKTEL…GQQPIVRKVV (112 aa). The segment at 27-216 is necessary for interaction with SART3; sequence TLQRGAQWYL…LYQGQVLVIE (190 aa). A Nuclear export signal motif is present at residues 133-141; it reads VEVYLLELK. The Ubiquitin-like 1 domain occupies 142-226; that stretch reads LCENSDPTNV…PQNEDGTWPR (85 aa). The tract at residues 219-257 is disordered; that stretch reads NEDGTWPRQTLQSKSSTAPSRNFTTSSKPSASPYSSMSA. The segment covering 225–243 has biased composition (polar residues); the sequence is PRQTLQSKSSTAPSRNFTT. The segment at 229–295 is required for USP4 activation by providing conformational flexibility between the DUSP and catalytic domains; sequence LQSKSSTAPS…SYNCQEPPSP (67 aa). The span at 244–257 shows a compositional bias: low complexity; that stretch reads SSKPSASPYSSMSA. In terms of domain architecture, USP spans 302–921; the sequence is CGLGNLGNTC…AAYVLFYQRR (620 aa). Residue Cys-311 is part of the active site. The regulates ubiquitin dissociation stretch occupies residues 384 to 386; sequence PQF. The interval 405 to 407 is necessary for interaction with RBL2; that stretch reads LHE. A Phosphoserine modification is found at Ser-445. The segment at 459–463 is necessary for interaction with RB1 and RBL2; the sequence is LVCPE. Residues Cys-461 and Cys-464 each coordinate Zn(2+). The Ubiquitin-like 2 domain occupies 483 to 571; the sequence is LKKDRIMEVF…IFVYEICTTP (89 aa). Residues 485–773 are interacts with DUSP and ubiquitin-like 1 domains and is required for USP4 activation; sequence KDRIMEVFLV…SQPQKKKKAA (289 aa). The segment at 641–700 is disordered; the sequence is SSPLEPGACNGSRGSYEGDEEEMDHQEEGKEQLSEVEESGEDSQGGDPTETTQKAKGPPR. Phosphoserine occurs at positions 655, 674, and 679. A Nuclear localization signal motif is present at residues 765–770; that stretch reads QPQKKK. Cys-797 and Cys-800 together coordinate Zn(2+). His-879 is an active-site residue. The disordered stretch occupies residues 924-961; it reads ECPSTSSPVSFPGSDGGAKLSSSQQDLGEEEAYTMDTN. Over residues 950-961 the composition is skewed to acidic residues; sequence LGEEEAYTMDTN.

Belongs to the peptidase C19 family. USP4 subfamily. Interacts with RB1 (both dephosphorylated and hypophosphorylated forms). Interacts with RBL1 and RBL2. Interacts with ADORA2A (via cytoplasmic C-terminus); the interaction is direct. Interacts with SART3; recruits USP4 to its substrate PRPF3. Phosphorylated at Ser-445 by PKB/AKT1 in response to EGF stimulus, promoting its ability deubiquitinate RHEB. In terms of processing, monoubiquitinated by TRIM21. Ubiquitination does not lead to its proteasomal degradation. Autodeubiquitinated. As to expression, expressed in hippocampus and striatum (at protein level).

It is found in the cytoplasm. The protein resides in the nucleus. It carries out the reaction Thiol-dependent hydrolysis of ester, thioester, amide, peptide and isopeptide bonds formed by the C-terminal Gly of ubiquitin (a 76-residue protein attached to proteins as an intracellular targeting signal).. Its activity is regulated as follows. The completion of the deubiquitinase reaction is mediated by the DUSP and ubiquitin-like 1 domains which promotes the release of ubiquitin from the catalytic site enabling subsequent reactions to occur. In terms of biological role, deubiquitinating enzyme that removes conjugated ubiquitin from target proteins. Deubiquitinates PDPK1. Deubiquitinates TRIM21. Deubiquitinates receptor ADORA2A which increases the amount of functional receptor at the cell surface. Deubiquitinates HAS2. Deubiquitinates RHEB in response to EGF signaling, promoting mTORC1 signaling. May regulate mRNA splicing through deubiquitination of the U4 spliceosomal protein PRPF3. This may prevent its recognition by the U5 component PRPF8 thereby destabilizing interactions within the U4/U6.U5 snRNP. May also play a role in the regulation of quality control in the ER. The polypeptide is Ubiquitin carboxyl-terminal hydrolase 4 (Usp4) (Rattus norvegicus (Rat)).